The chain runs to 538 residues: Phospho-2-dehydro-3-deoxyheptonate aldolase 1, chloroplastic (538 aa).

A chloroplast-targeting transit peptide spans methionine 1–alanine 74. A disordered region spans residues aspartate 55 to proline 82. The segment covering lysine 68–proline 82 has biased composition (low complexity). Position 75 is a blocked amino end (Thr) (threonine 75).

It belongs to the class-II DAHP synthase family.

Its subcellular location is the plastid. It is found in the chloroplast. The catalysed reaction is D-erythrose 4-phosphate + phosphoenolpyruvate + H2O = 7-phospho-2-dehydro-3-deoxy-D-arabino-heptonate + phosphate. It functions in the pathway metabolic intermediate biosynthesis; chorismate biosynthesis; chorismate from D-erythrose 4-phosphate and phosphoenolpyruvate: step 1/7. Its activity is regulated as follows. Activation by tryptophan (a hysteretic factor). The chain is Phospho-2-dehydro-3-deoxyheptonate aldolase 1, chloroplastic (SHKA) from Solanum tuberosum (Potato).